A 320-amino-acid polypeptide reads, in one-letter code: Mas-related G-protein coupled receptor member D (320 aa).

Residues 1-33 (MNQTLNSSGTAELALNHSRGSVVHAACLVLSSL) are Extracellular-facing. N-linked (GlcNAc...) asparagine glycans are attached at residues asparagine 2, asparagine 6, and asparagine 16. A helical membrane pass occupies residues 34–54 (AMFTCLCGMAGNSMVIWLLGF). Over 55–62 (RMRRTPFS) the chain is Cytoplasmic. Residues 63–83 (IYILNLAAADLLFVFCMAAML) traverse the membrane as a helical segment. The Extracellular segment spans residues 84–112 (SLETQPLVSTTDKVHELMKRLKYFAYTVG). The helical transmembrane segment at 113–133 (LSLLTAISTQRCLSVLFPIWF) threads the bilayer. The Cytoplasmic portion of the chain corresponds to 134–142 (KCHRPRHLS). Residues 143–163 (AWVCALLWMLCLLTNGLTSCF) form a helical membrane-spanning segment. The Extracellular portion of the chain corresponds to 164-182 (CSKFLKFNKDQCFRVDMVQ). A helical membrane pass occupies residues 183 to 203 (AALIMGVLTPVMTLSSLTLFV). The Cytoplasmic portion of the chain corresponds to 204-218 (RVRRSSQQWRRQPTR). A helical membrane pass occupies residues 219-239 (LFVVVLASVLVFLICSLPLGF). Residues 240 to 257 (YWFVLYWLNLPPDTKVLY) lie on the Extracellular side of the membrane. Residues 258–280 (FNLSRLSSSMSSSANPLIYFLVG) form a helical membrane-spanning segment. Residues 281–320 (SRRSRRLQGSLGTVLQRALREEPELEGGETPTTGTNEMGA) are Cytoplasmic-facing. The interval 301-320 (EEPELEGGETPTTGTNEMGA) is disordered. Positions 308 to 320 (GETPTTGTNEMGA) are enriched in low complexity.

The protein belongs to the G-protein coupled receptor 1 family. Mas subfamily. Co-expressed in the small diameter neurons with P2X3 and VR1 in dorsal root ganglia.

The protein resides in the cell membrane. In terms of biological role, may regulate nociceptor function and/or development, including the sensation or modulation of pain. Functions as a specific membrane receptor for beta-alanine. The receptor couples with G-protein G(q) and G(i). The polypeptide is Mas-related G-protein coupled receptor member D (MRGPRD) (Macaca fascicularis (Crab-eating macaque)).